A 655-amino-acid polypeptide reads, in one-letter code: Sphingomyelin phosphodiesterase 3 (655 aa).

Over 1–10 the chain is Cytoplasmic; the sequence is MVLYTTPFPN. The segment at residues 11-31 is an intramembrane region (helical); sequence SCLSALHAVSWALIFPCYWLV. Topologically, residues 32–64 are cytoplasmic; sequence DRLVASFIPTTYEKRQRADDPCYLQLFCTVLFT. 2 S-palmitoyl cysteine lipidation sites follow: cysteine 53 and cysteine 59. An intramembrane region (helical) is located at residues 65–85; it reads PVYLALLVAALPFAFLGFIFW. Over 86–655 the chain is Cytoplasmic; sequence SPLQSARRPY…LMVSAGEEEA (570 aa). At serine 178 the chain carries Phosphoserine. 2 disordered regions span residues 209 to 237 and 250 to 320; these read VEYK…DGSL and GGRA…SNSK. Residues 211–221 show a composition bias toward basic and acidic residues; the sequence is YKGDGGRHPSD. Serine 289 is subject to Phosphoserine. Residue glutamate 362 participates in Mg(2+) binding. 2 S-palmitoyl cysteine lipidation sites follow: cysteine 395 and cysteine 396. Catalysis depends on histidine 639, which acts as the Proton acceptor.

The protein belongs to the neutral sphingomyelinase family. Requires Mg(2+) as cofactor. Palmitoylated, palmitoylation-deficient proteins are targeted for lysosomal degradation. In brain sections, it is restricted to neurons and especially prominent in large cells, including Purkinje cells, pyramidal cells, neurons of the dentate gyrus granular layer, and neurons in the pontine nuclei. Also present in the hypothalamic nuclei, neurons in the piriform cortex, and nuclei of the brainstem (at protein level). Mainly expressed in brain and jejunum. Weakly or not expressed in heart, spleen, lung, liver, kidney and testis.

It is found in the golgi apparatus membrane. It localises to the cell membrane. It catalyses the reaction a sphingomyelin + H2O = phosphocholine + an N-acylsphing-4-enine + H(+). The catalysed reaction is N-(15Z-tetracosenoyl)sphing-4-enine-1-phosphocholine + H2O = N-(15Z-tetracosenoyl)-sphing-4-enine + phosphocholine + H(+). It carries out the reaction N-(tetracosanoyl)-sphing-4-enine-1-phosphocholine + H2O = N-tetracosanoyl-sphing-4-enine + phosphocholine + H(+). The enzyme catalyses an N-(acyl)-sphingosylphosphocholine + H2O = an N-acyl-sphingoid base + phosphocholine + H(+). It catalyses the reaction 1-hexadecanoyl-sn-glycero-3-phosphocholine + H2O = 1-hexadecanoyl-sn-glycerol + phosphocholine + H(+). The catalysed reaction is 1-O-octadecyl-sn-glycero-3-phosphocholine + H2O = 1-O-octadecyl-sn-glycerol + phosphocholine + H(+). It carries out the reaction a sphingosylphosphocholine + H2O = a sphingoid base + phosphocholine + H(+). The enzyme catalyses N-(hexadecanoyl)-sphing-4-enine-1-phosphocholine + H2O = N-hexadecanoylsphing-4-enine + phosphocholine + H(+). The protein operates within lipid metabolism; sphingolipid metabolism. Its activity is regulated as follows. Inhibited by nSMase inhibitor GW4869. Binding of anionic phospholipids (APLs) such as phosphatidylserine (PS) and phosphatidic acid (PA) increases enzymatic activity. Catalyzes the hydrolysis of sphingomyelin to form ceramide and phosphocholine. Ceramide mediates numerous cellular functions, such as apoptosis and growth arrest, and is capable of regulating these 2 cellular events independently. Also hydrolyzes sphingosylphosphocholine. Binds to anionic phospholipids (APLs) such as phosphatidylserine (PS) and phosphatidic acid (PA) that modulate enzymatic activity and subcellular location. Regulates the cell cycle by acting as a growth suppressor in confluent cells. Acts as a regulator of postnatal development and participates in bone and dentin mineralization. May be involved in IL-1-beta-induced JNK activation in hepatocytes. May act as a mediator in transcriptional regulation of NOS2/iNOS via the NF-kappa-B activation under inflammatory conditions. The sequence is that of Sphingomyelin phosphodiesterase 3 from Rattus norvegicus (Rat).